Consider the following 291-residue polypeptide: 3-hydroxy-5-phosphonooxypentane-2,4-dione thiolase (291 aa).

The active-site Schiff-base intermediate with substrate is the K203.

It belongs to the DeoC/FbaB aldolase family. As to quaternary structure, homodecamer.

The protein resides in the cytoplasm. The catalysed reaction is dihydroxyacetone phosphate + acetyl-CoA = 3-hydroxy-2,4-dioxopentyl phosphate + CoA. Functionally, involved in the degradation of phospho-AI-2, thereby terminating induction of the lsr operon and closing the AI-2 signaling cycle. Catalyzes the transfer of an acetyl moiety from 3-hydroxy-5-phosphonooxypentane-2,4-dione to CoA to form glycerone phosphate and acetyl-CoA. The chain is 3-hydroxy-5-phosphonooxypentane-2,4-dione thiolase from Photorhabdus laumondii subsp. laumondii (strain DSM 15139 / CIP 105565 / TT01) (Photorhabdus luminescens subsp. laumondii).